A 407-amino-acid chain; its full sequence is Obg-like ATPase homolog (407 aa).

Residues 46–301 (LKIGIVGMPN…LTPEEAAQEC (256 aa)) enclose the OBG-type G domain. ATP contacts are provided by residues 55 to 60 (NIGKST) and methionine 249. The TGS domain occupies 322 to 405 (NLIHYFTASE…EPGDIIFWKI (84 aa)).

Belongs to the TRAFAC class OBG-HflX-like GTPase superfamily. OBG GTPase family.

Functionally, hydrolyzes ATP, and can also hydrolyze GTP with lower efficiency. Has lower affinity for GTP. In Schizosaccharomyces pombe (strain 972 / ATCC 24843) (Fission yeast), this protein is Obg-like ATPase homolog.